The primary structure comprises 154 residues: MGLSDAEWQLVLNVWGKVEADLAGHGQEVLIRLFHTHPETLEKFDKFKHLKSEDEMKASEDLKKHGNTVLTALGAILKKKGHHEAEIKPLAQSHATKHKIPVKYLEFISEAIIHVLHSKHPGDFGADAQAAMSKALELFRNDIAAQYKELGFQG.

The region spanning 2-148 (GLSDAEWQLV…FRNDIAAQYK (147 aa)) is the Globin domain. Ser4 carries the post-translational modification Phosphoserine. Nitrite is bound at residue His65. Residue His65 participates in O2 binding. Thr68 carries the post-translational modification Phosphothreonine. His94 contributes to the heme b binding site.

Belongs to the globin family. In terms of assembly, monomeric.

It is found in the cytoplasm. The protein resides in the sarcoplasm. The catalysed reaction is Fe(III)-heme b-[protein] + nitric oxide + H2O = Fe(II)-heme b-[protein] + nitrite + 2 H(+). It carries out the reaction H2O2 + AH2 = A + 2 H2O. Monomeric heme protein which primary function is to store oxygen and facilitate its diffusion within muscle tissues. Reversibly binds oxygen through a pentacoordinated heme iron and enables its timely and efficient release as needed during periods of heightened demand. Depending on the oxidative conditions of tissues and cells, and in addition to its ability to bind oxygen, it also has a nitrite reductase activity whereby it regulates the production of bioactive nitric oxide. Under stress conditions, like hypoxia and anoxia, it also protects cells against reactive oxygen species thanks to its pseudoperoxidase activity. The sequence is that of Myoglobin (MB) from Oryctolagus cuniculus (Rabbit).